Here is a 254-residue protein sequence, read N- to C-terminus: Probable phosphomannomutase (254 aa).

Catalysis depends on Asp-14, which acts as the Nucleophile. Mg(2+)-binding residues include Asp-14 and Asp-16. Asp-16 acts as the Proton donor/acceptor in catalysis. Alpha-D-mannose 1-phosphate-binding residues include Arg-23, Arg-129, Arg-140, Arg-147, Ser-185, and Asp-187. Residues Asp-214, Phe-226, Asp-228, and Thr-231 each coordinate Mg(2+).

Belongs to the eukaryotic PMM family. In terms of assembly, homodimer.

It is found in the cytoplasm. The enzyme catalyses alpha-D-mannose 1-phosphate = D-mannose 6-phosphate. It participates in nucleotide-sugar biosynthesis; GDP-alpha-D-mannose biosynthesis; alpha-D-mannose 1-phosphate from D-fructose 6-phosphate: step 2/2. In terms of biological role, involved in the synthesis of the GDP-mannose and dolichol-phosphate-mannose required for a number of critical mannosyl transfer reactions. The polypeptide is Probable phosphomannomutase (Caenorhabditis elegans).